The chain runs to 689 residues: Transcription factor BHLH42 (689 aa).

Disordered stretches follow at residues 192–287 (IDHH…NPRV) and 458–489 (DDNNSPKSATAADSASRFRKPTPQDELSANHV). A compositionally biased stretch (polar residues) spans 206-217 (EHSTSNLATSSV). Acidic residues predominate over residues 246-271 (EEQEQEQEEDEDDDDDDDDEEEAESD). The tract at residues 483 to 496 (ELSANHVLAERRRR) is basic motif. The 50-residue stretch at 483-532 (ELSANHVLAERRRREKLNERFIILRSLVPFVTKMDKASILGDTIEYVKQL) folds into the bHLH domain. The segment at 497 to 532 (EKLNERFIILRSLVPFVTKMDKASILGDTIEYVKQL) is helix-loop-helix motif. The segment at 547-570 (EIDQRSRSSGDPQRSGAKAATDKR) is disordered.

Belongs to the bHLH protein family. In terms of assembly, interacts with MYB123. As to expression, expressed in the inner pericarp of maturing fruits.

The protein localises to the nucleus. Its function is as follows. Transcription activator involved in the spatiotemporal regulation of anthocyanin biosynthesis specifically in the inner pericarp of red-fleshed kiwifruits. Functions in association with MYB123 to activate the promoters of LDOX (ANS) and F3GT1 that encode the dedicated enzymes for anthocyanin biosynthesis. In Actinidia chinensis var. chinensis (Chinese soft-hair kiwi), this protein is Transcription factor BHLH42.